A 273-amino-acid chain; its full sequence is Dermonecrotic toxin LapSicTox-alphaII1 (273 aa).

The active site involves His-5. Residues Glu-25 and Asp-27 each contribute to the Mg(2+) site. His-41 serves as the catalytic Nucleophile. 2 cysteine pairs are disulfide-bonded: Cys-45-Cys-51 and Cys-47-Cys-191. Position 85 (Asp-85) interacts with Mg(2+).

It belongs to the arthropod phospholipase D family. Class II subfamily. Mg(2+) serves as cofactor. In terms of tissue distribution, expressed by the venom gland.

Its subcellular location is the secreted. The catalysed reaction is an N-(acyl)-sphingosylphosphocholine = an N-(acyl)-sphingosyl-1,3-cyclic phosphate + choline. The enzyme catalyses an N-(acyl)-sphingosylphosphoethanolamine = an N-(acyl)-sphingosyl-1,3-cyclic phosphate + ethanolamine. It catalyses the reaction a 1-acyl-sn-glycero-3-phosphocholine = a 1-acyl-sn-glycero-2,3-cyclic phosphate + choline. It carries out the reaction a 1-acyl-sn-glycero-3-phosphoethanolamine = a 1-acyl-sn-glycero-2,3-cyclic phosphate + ethanolamine. In terms of biological role, dermonecrotic toxins cleave the phosphodiester linkage between the phosphate and headgroup of certain phospholipids (sphingolipid and lysolipid substrates), forming an alcohol (often choline) and a cyclic phosphate. This toxin acts on sphingomyelin (SM). It may also act on ceramide phosphoethanolamine (CPE), lysophosphatidylcholine (LPC) and lysophosphatidylethanolamine (LPE), but not on lysophosphatidylserine (LPS), and lysophosphatidylglycerol (LPG). It acts by transphosphatidylation, releasing exclusively cyclic phosphate products as second products. Induces dermonecrosis, hemolysis, increased vascular permeability, edema, inflammatory response, and platelet aggregation. This chain is Dermonecrotic toxin LapSicTox-alphaII1, found in Loxosceles apachea (Apache recluse spider).